A 1072-amino-acid chain; its full sequence is Translation initiation factor IF-2 (1072 aa).

Disordered stretches follow at residues 55–369 and 426–452; these read ILDK…TGTA and ELVD…VSKQ. Composition is skewed to low complexity over residues 91 to 100, 108 to 118, 126 to 179, and 186 to 212; these read AEASQAAEPA, EPATFAAEEPV, APRA…AEVA, and EAPQ…PSVQ. The segment covering 218-230 has biased composition (pro residues); sequence PQPPPRSPVPPAV. Low complexity predominate over residues 231–245; that stretch reads RTPSSTSSSATVVSR. The span at 253–307 shows a compositional bias: gly residues; that stretch reads QRGGPGGGRPGGPGGPGGRPGGPGGPGGRPGGPGGPGGRPGGPGGPGGRPGGPGG. Residues 426–436 show a composition bias toward basic and acidic residues; the sequence is ELVDVSKNKER. Residues 570-737 enclose the tr-type G domain; the sequence is PRPPVVAIMG…NLALQAEVLE (168 aa). Residues 579–586 are G1; it reads GHVDHGKT. Residue 579–586 participates in GTP binding; that stretch reads GHVDHGKT. The segment at 604 to 608 is G2; that stretch reads GITQH. Residues 625–628 form a G3 region; that stretch reads DTPG. Residues 625–629 and 679–682 contribute to the GTP site; these read DTPGH and NKMD. Residues 679–682 form a G4 region; sequence NKMD. The segment at 715-717 is G5; sequence SAK.

It belongs to the TRAFAC class translation factor GTPase superfamily. Classic translation factor GTPase family. IF-2 subfamily.

The protein resides in the cytoplasm. In terms of biological role, one of the essential components for the initiation of protein synthesis. Protects formylmethionyl-tRNA from spontaneous hydrolysis and promotes its binding to the 30S ribosomal subunits. Also involved in the hydrolysis of GTP during the formation of the 70S ribosomal complex. In Myxococcus xanthus (strain DK1622), this protein is Translation initiation factor IF-2.